A 410-amino-acid polypeptide reads, in one-letter code: uncharacterized protein (410 aa).

Polar residues predominate over residues 178–187; sequence QKNHRNQLST. Disordered stretches follow at residues 178-203 and 236-272; these read QKNH…QEHQ and RAEQ…PTVQ. The segment covering 188 to 198 has biased composition (low complexity); the sequence is QKKQQQALQKA. Residues 236-263 show a composition bias toward basic and acidic residues; it reads RAEQAAREQEKREREALAQRQKAEEKRT.

This is an uncharacterized protein from Haemophilus influenzae (strain ATCC 51907 / DSM 11121 / KW20 / Rd).